We begin with the raw amino-acid sequence, 130 residues long: Ribonuclease P protein component 2 (130 aa).

It belongs to the eukaryotic/archaeal RNase P protein component 2 family. In terms of assembly, consists of a catalytic RNA component and at least 4-5 protein subunits.

The protein resides in the cytoplasm. The catalysed reaction is Endonucleolytic cleavage of RNA, removing 5'-extranucleotides from tRNA precursor.. Functionally, part of ribonuclease P, a protein complex that generates mature tRNA molecules by cleaving their 5'-ends. This is Ribonuclease P protein component 2 from Methanococcus maripaludis (strain C7 / ATCC BAA-1331).